We begin with the raw amino-acid sequence, 234 residues long: Glucosamine-6-phosphate deaminase (234 aa).

Asp-63 functions as the Proton acceptor; for enolization step in the catalytic mechanism. Asn-129 serves as the catalytic For ring-opening step. The active-site Proton acceptor; for ring-opening step is His-131. The active-site For ring-opening step is the Glu-136.

Belongs to the glucosamine/galactosamine-6-phosphate isomerase family. NagB subfamily.

It carries out the reaction alpha-D-glucosamine 6-phosphate + H2O = beta-D-fructose 6-phosphate + NH4(+). It participates in amino-sugar metabolism; N-acetylneuraminate degradation; D-fructose 6-phosphate from N-acetylneuraminate: step 5/5. Functionally, catalyzes the reversible isomerization-deamination of glucosamine 6-phosphate (GlcN6P) to form fructose 6-phosphate (Fru6P) and ammonium ion. The polypeptide is Glucosamine-6-phosphate deaminase (Listeria innocua serovar 6a (strain ATCC BAA-680 / CLIP 11262)).